A 467-amino-acid polypeptide reads, in one-letter code: Gamma-aminobutyric acid receptor subunit gamma-3 (467 aa).

An N-terminal signal peptide occupies residues 1-17 (MAPKLLLLLCLFSGLHA). Over 18–256 (RSRKVEEDEY…FELSRRMGYF (239 aa)) the chain is Extracellular. N-linked (GlcNAc...) asparagine glycosylation occurs at Asn110. Residues Cys171 and Cys185 are joined by a disulfide bond. N-linked (GlcNAc...) asparagine glycosylation occurs at Asn228. The helical transmembrane segment at 257 to 277 (TIQTYIPCILTVVLSWVSFWI) threads the bilayer. Topologically, residues 278-283 (KKDATP) are cytoplasmic. A helical transmembrane segment spans residues 284–303 (ARTALGITTVLTMTTLSTIA). At 304 to 311 (RKSLPRVS) the chain is on the extracellular side. The chain crosses the membrane as a helical span at residues 312–332 (YVTAMDLFVTVCFLFVFAALM). Topologically, residues 333–446 (EYATLNYYSS…DILELDSYSR (114 aa)) are cytoplasmic. The chain crosses the membrane as a helical span at residues 447-467 (VFFPTSFLLFNLVYWVGYLYL).

Belongs to the ligand-gated ion channel (TC 1.A.9) family. Gamma-aminobutyric acid receptor (TC 1.A.9.5) subfamily. GABRG3 sub-subfamily. As to quaternary structure, heteropentamer, formed by a combination of alpha (GABRA1-6), beta (GABRB1-3), gamma (GABRG1-3), delta (GABRD), epsilon (GABRE), rho (GABRR1-3), pi (GABRP) and theta (GABRQ) chains, each subunit exhibiting distinct physiological and pharmacological properties. Post-translationally, may be palmitoylated. Expressed in brain.

The protein localises to the postsynaptic cell membrane. Its subcellular location is the cell membrane. The enzyme catalyses chloride(in) = chloride(out). Functionally, gamma subunit of the heteropentameric ligand-gated chloride channel gated by gamma-aminobutyric acid (GABA), a major inhibitory neurotransmitter in the brain. GABA-gated chloride channels, also named GABA(A) receptors (GABAAR), consist of five subunits arranged around a central pore and contain GABA active binding site(s) located at the alpha and beta subunit interface(s). When activated by GABA, GABAARs selectively allow the flow of chloride across the cell membrane down their electrochemical gradient. This is Gamma-aminobutyric acid receptor subunit gamma-3 from Homo sapiens (Human).